We begin with the raw amino-acid sequence, 554 residues long: 3-(3-hydroxy-phenyl)propionate/3-hydroxycinnamic acid hydroxylase (554 aa).

FAD contacts are provided by residues Gln-17–Lys-46 and Phe-285–Asp-295.

The protein belongs to the PheA/TfdB FAD monooxygenase family. FAD is required as a cofactor.

The enzyme catalyses 3-(3-hydroxyphenyl)propanoate + NADH + O2 + H(+) = 3-(2,3-dihydroxyphenyl)propanoate + NAD(+) + H2O. The catalysed reaction is (2E)-3-(3-hydroxyphenyl)prop-2-enoate + NADH + O2 + H(+) = (2E)-3-(2,3-dihydroxyphenyl)prop-2-enoate + NAD(+) + H2O. Its pathway is aromatic compound metabolism; 3-phenylpropanoate degradation. In terms of biological role, catalyzes the insertion of one atom of molecular oxygen into position 2 of the phenyl ring of 3-(3-hydroxyphenyl)propionate (3-HPP) and hydroxycinnamic acid (3HCI). This Escherichia coli (strain K12 / DH10B) protein is 3-(3-hydroxy-phenyl)propionate/3-hydroxycinnamic acid hydroxylase.